Reading from the N-terminus, the 290-residue chain is Expansin-A26 (290 aa).

An N-terminal signal peptide occupies residues 1–29 (MDTTTTMAPLPLLTTTSLLLFFFLASSFA). The disordered stretch occupies residues 45-67 (DGGGDGEGGGGGDGEGGGGGGGA). An Expansin-like EG45 domain is found at 101 to 196 (GGACGYKDAD…RKVACVRQGG (96 aa)). One can recognise an Expansin-like CBD domain in the interval 206–286 (SYNMVMVKNV…DWTYDNTYQA (81 aa)). The N-linked (GlcNAc...) asparagine glycan is linked to N250.

Belongs to the expansin family. Expansin A subfamily. Expressed in flowers.

The protein resides in the secreted. It is found in the cell wall. The protein localises to the membrane. May cause loosening and extension of plant cell walls by disrupting non-covalent bonding between cellulose microfibrils and matrix glucans. No enzymatic activity has been found. May be required for rapid internodal elongation in deepwater rice during submergence. The chain is Expansin-A26 (EXPA26) from Oryza sativa subsp. japonica (Rice).